We begin with the raw amino-acid sequence, 701 residues long: Polyribonucleotide nucleotidyltransferase (701 aa).

Positions 485 and 491 each coordinate Mg(2+). One can recognise a KH domain in the interval 552-611; it reads PKIFKTTVDPEKIRDIIGPGGKMINKIIAETNVKIDIEPDGRIFVAAPDDISGNRAISMI. One can recognise an S1 motif domain in the interval 621-689; the sequence is GQFFLGKVTR…KLGRLSLSRK (69 aa).

Belongs to the polyribonucleotide nucleotidyltransferase family. Mg(2+) serves as cofactor.

It is found in the cytoplasm. It carries out the reaction RNA(n+1) + phosphate = RNA(n) + a ribonucleoside 5'-diphosphate. Its function is as follows. Involved in mRNA degradation. Catalyzes the phosphorolysis of single-stranded polyribonucleotides processively in the 3'- to 5'-direction. This Caldicellulosiruptor bescii (strain ATCC BAA-1888 / DSM 6725 / KCTC 15123 / Z-1320) (Anaerocellum thermophilum) protein is Polyribonucleotide nucleotidyltransferase.